The following is a 535-amino-acid chain: uncharacterized protein (535 aa).

A run of 2 helical transmembrane segments spans residues 7-27 (DFDV…AYLA) and 509-529 (GGAV…ACLA).

The protein localises to the cell membrane. This is an uncharacterized protein from Mycobacterium bovis (strain ATCC BAA-935 / AF2122/97).